A 210-amino-acid polypeptide reads, in one-letter code: Large ribosomal subunit protein uL4 (210 aa).

A compositionally biased stretch (polar residues) spans 41–52 (QTNARQGTASTK). The disordered stretch occupies residues 41–71 (QTNARQGTASTKTRAEVRGGGRKPWRQKGTG). The span at 60 to 71 (GGRKPWRQKGTG) shows a compositional bias: basic residues.

It belongs to the universal ribosomal protein uL4 family. In terms of assembly, part of the 50S ribosomal subunit.

In terms of biological role, one of the primary rRNA binding proteins, this protein initially binds near the 5'-end of the 23S rRNA. It is important during the early stages of 50S assembly. It makes multiple contacts with different domains of the 23S rRNA in the assembled 50S subunit and ribosome. Functionally, forms part of the polypeptide exit tunnel. The sequence is that of Large ribosomal subunit protein uL4 from Trichormus variabilis (strain ATCC 29413 / PCC 7937) (Anabaena variabilis).